Here is a 130-residue protein sequence, read N- to C-terminus: Small ribosomal subunit protein eS17 (130 aa).

The protein belongs to the eukaryotic ribosomal protein eS17 family.

This Theileria parva (East coast fever infection agent) protein is Small ribosomal subunit protein eS17 (RPS17).